The chain runs to 309 residues: THAP domain-containing protein 7 (309 aa).

The THAP-type zinc-finger motif lies at Met-1–Phe-93. Positions Thr-158–Val-209 are disordered. Phosphoserine is present on Ser-162. The span at Glu-198 to Val-209 shows a compositional bias: pro residues. Ser-210 carries the phosphoserine modification. Residues Glu-229 to Tyr-232 carry the HCFC1-binding motif (HBM) motif.

As to quaternary structure, forms homodimers. Interacts with HDAC3 and nuclear hormone receptor corepressors. Interacts via HBM with HCFC1.

The protein localises to the nucleus. It localises to the chromosome. Its function is as follows. Chromatin-associated, histone tail-binding protein that represses transcription via recruitment of HDAC3 and nuclear hormone receptor corepressors. The sequence is that of THAP domain-containing protein 7 (THAP7) from Homo sapiens (Human).